The following is a 472-amino-acid chain: Eukaryotic translation initiation factor 2 subunit 3 (472 aa).

N-acetylalanine; partial is present on Ala2. Residue Ser16 is modified to Phosphoserine. The tr-type G domain occupies 39–248 (QATINIGTIG…IVKKIPVPPR (210 aa)). The tract at residues 48-55 (GHVAHGKS) is G1. 51-56 (AHGKST) lines the GTP pocket. Residues 76–80 (NITIK) are G2. Positions 134–137 (DCPG) are G3. Residues 190–193 (NKID) and 225–227 (SAQ) each bind GTP. Positions 190 to 193 (NKID) are G4. The interval 225–227 (SAQ) is G5. The interval 457-469 (GQIRRGVTIKPTV) is interacts with CDC123.

It belongs to the TRAFAC class translation factor GTPase superfamily. Classic translation factor GTPase family. EIF2G subfamily. As to quaternary structure, eukaryotic translation initiation factor 2 eIF2 is a heterotrimeric complex composed of an alpha (EIF2S1), a beta (EIF2S2) and a gamma (EIF2S3) chain. eIF2 is member of the 43S pre-initiation complex (43S PIC). Interacts (via C-terminus) with CDC123; the interaction is direct. In terms of tissue distribution, expressed in testis, brain, liver and muscle.

It localises to the cytoplasm. The protein localises to the cytosol. It carries out the reaction GTP + H2O = GDP + phosphate + H(+). In terms of biological role, member of the eIF2 complex that functions in the early steps of protein synthesis by forming a ternary complex with GTP and initiator tRNA. This complex binds to a 40S ribosomal subunit, followed by mRNA binding to form the 43S pre-initiation complex (43S PIC). Junction of the 60S ribosomal subunit to form the 80S initiation complex is preceded by hydrolysis of the GTP bound to eIF2 and release of an eIF2-GDP binary complex. In order for eIF2 to recycle and catalyze another round of initiation, the GDP bound to eIF2 must exchange with GTP by way of a reaction catalyzed by eIF-2B. The chain is Eukaryotic translation initiation factor 2 subunit 3 (EIF2S3) from Homo sapiens (Human).